Here is a 252-residue protein sequence, read N- to C-terminus: tRNA (guanine-N(1)-)-methyltransferase (252 aa).

S-adenosyl-L-methionine is bound by residues Gly-113 and 133–138; that span reads IGDYVL.

This sequence belongs to the RNA methyltransferase TrmD family. As to quaternary structure, homodimer.

Its subcellular location is the cytoplasm. It catalyses the reaction guanosine(37) in tRNA + S-adenosyl-L-methionine = N(1)-methylguanosine(37) in tRNA + S-adenosyl-L-homocysteine + H(+). Functionally, specifically methylates guanosine-37 in various tRNAs. The sequence is that of tRNA (guanine-N(1)-)-methyltransferase from Xanthomonas campestris pv. campestris (strain 8004).